A 110-amino-acid polypeptide reads, in one-letter code: Ribonuclease P protein component (110 aa).

Belongs to the RnpA family. Consists of a catalytic RNA component (M1 or rnpB) and a protein subunit.

The enzyme catalyses Endonucleolytic cleavage of RNA, removing 5'-extranucleotides from tRNA precursor.. RNaseP catalyzes the removal of the 5'-leader sequence from pre-tRNA to produce the mature 5'-terminus. It can also cleave other RNA substrates such as 4.5S RNA. The protein component plays an auxiliary but essential role in vivo by binding to the 5'-leader sequence and broadening the substrate specificity of the ribozyme. The protein is Ribonuclease P protein component of Mesoplasma florum (strain ATCC 33453 / NBRC 100688 / NCTC 11704 / L1) (Acholeplasma florum).